A 347-amino-acid polypeptide reads, in one-letter code: tRNA N6-adenosine threonylcarbamoyltransferase (347 aa).

Residues His109 and His113 each coordinate Fe cation. Substrate-binding positions include 136-140, Asp169, Gly182, Asp186, and Asn284; that span reads TVSGG. Residue Asp312 coordinates Fe cation.

The protein belongs to the KAE1 / TsaD family. Fe(2+) serves as cofactor.

It is found in the cytoplasm. It catalyses the reaction L-threonylcarbamoyladenylate + adenosine(37) in tRNA = N(6)-L-threonylcarbamoyladenosine(37) in tRNA + AMP + H(+). Required for the formation of a threonylcarbamoyl group on adenosine at position 37 (t(6)A37) in tRNAs that read codons beginning with adenine. Is involved in the transfer of the threonylcarbamoyl moiety of threonylcarbamoyl-AMP (TC-AMP) to the N6 group of A37, together with TsaE and TsaB. TsaD likely plays a direct catalytic role in this reaction. The protein is tRNA N6-adenosine threonylcarbamoyltransferase of Chlorobium phaeobacteroides (strain BS1).